Consider the following 104-residue polypeptide: UPF0145 protein STH1265 (104 aa).

Belongs to the UPF0145 family.

The sequence is that of UPF0145 protein STH1265 from Symbiobacterium thermophilum (strain DSM 24528 / JCM 14929 / IAM 14863 / T).